We begin with the raw amino-acid sequence, 130 residues long: Astrocytic phosphoprotein PEA-15 (130 aa).

Residues 3 to 81 (EYGTLLQDLT…RPDLLTMVVD (79 aa)) form the DED domain. Residues Ser-61 and Ser-90 each carry the phosphoserine modification. A microtubule-binding region spans residues 98-107 (KLTRIPSAKK). The residue at position 104 (Ser-104) is a Phosphoserine; by PKC. Position 116 is a phosphoserine; by CaMK2 (Ser-116). The microtubule-binding stretch occupies residues 122–129 (KLAPPPKK).

As to quaternary structure, binds RPS6KA3, MAPK3 and MAPK1. Interacts with CASP8 and FADD. Transient interaction with PLD1 and PLD2. Phosphorylated by protein kinase C and calcium-calmodulin-dependent protein kinase. These phosphorylation events are modulated by neurotransmitters or hormones. As to expression, predominantly expressed in the brain. Low levels in some peripheral organs.

It is found in the cytoplasm. In terms of biological role, blocks Ras-mediated inhibition of integrin activation and modulates the ERK MAP kinase cascade. Inhibits RPS6KA3 activities by retaining it in the cytoplasm. Inhibits both TNFRSF6- and TNFRSF1A-mediated CASP8 activity and apoptosis. Regulates glucose transport by controlling both the content of SLC2A1 glucose transporters on the plasma membrane and the insulin-dependent trafficking of SLC2A4 from the cell interior to the surface. The sequence is that of Astrocytic phosphoprotein PEA-15 (Pea15) from Mus musculus (Mouse).